Reading from the N-terminus, the 397-residue chain is Flavohemoprotein A (397 aa).

The Globin domain maps to 2–137 (SLSQQSISII…IAQAFIDAEA (136 aa)). His84 provides a ligand contact to heme b. Catalysis depends on charge relay system residues Tyr94 and Glu136. The reductase stretch occupies residues 150 to 397 (WRDTREFIVD…YEIFGPLTNV (248 aa)). Positions 151 to 266 (RDTREFIVDR…SPPAGDYVVD (116 aa)) constitute an FAD-binding FR-type domain. Residues Tyr189 and 208 to 211 (RHYS) contribute to the FAD site. 279 to 284 (GVGITP) contacts NADP(+). Position 390 to 393 (390 to 393 (IFGP)) interacts with FAD.

The protein belongs to the globin family. Two-domain flavohemoproteins subfamily. This sequence in the C-terminal section; belongs to the flavoprotein pyridine nucleotide cytochrome reductase family. The cofactor is FAD. Heme b is required as a cofactor.

It localises to the cytoplasm. The catalysed reaction is 2 nitric oxide + NADPH + 2 O2 = 2 nitrate + NADP(+) + H(+). The enzyme catalyses 2 nitric oxide + NADH + 2 O2 = 2 nitrate + NAD(+) + H(+). Is involved in NO detoxification in an aerobic process, termed nitric oxide dioxygenase (NOD) reaction that utilizes O(2) and NAD(P)H to convert NO to nitrate, which protects the cell from various noxious nitrogen compounds. Therefore, plays a central role in the inducible response to nitrosative stress. Its function is as follows. In the presence of oxygen and NADH, it has NADH oxidase activity, which leads to the generation of superoxide and H(2)O(2). Under anaerobic conditions, it also exhibits nitric oxide reductase and FAD reductase activities. However, all these reactions are much lower than NOD activity. In Dictyostelium discoideum (Social amoeba), this protein is Flavohemoprotein A (fhbA).